We begin with the raw amino-acid sequence, 200 residues long: Male-specific histamine-binding salivary protein (200 aa).

The N-terminal stretch at 1–18 is a signal peptide; the sequence is MKVLLLVLGAALCQNADA. The histamine site is built by S37, D41, D56, and W59. 2 disulfides stabilise this stretch: C65–C193 and C137–C169. N-linked (GlcNAc...) asparagine glycosylation is present at N79. Histamine-binding residues include E97, Y115, F125, D138, E154, and W156.

Belongs to the calycin superfamily. Histamine-binding salivary protein family. Homodimer; disulcde-linked. Post-translationally, N-glycosylated. As to expression, expressed in salivary glands.

The protein localises to the secreted. In terms of biological role, salivary tick protein that acts by scavenging histamine at the wound site, outcompeting histamine receptors for histamine, thereby overcoming host inflammatory responses. Binds histamine with a high-affinity (Kd=1.2 nM). Contains two binding histamine sites (H and L), that appear to bind histamine with differing affinities. The protein is Male-specific histamine-binding salivary protein of Rhipicephalus appendiculatus (Brown ear tick).